Here is a 259-residue protein sequence, read N- to C-terminus: DNA repair protein RecO (259 aa).

It belongs to the RecO family.

Its function is as follows. Involved in DNA repair and RecF pathway recombination. In Syntrophus aciditrophicus (strain SB), this protein is DNA repair protein RecO.